The sequence spans 145 residues: D-aminoacyl-tRNA deacylase (145 aa).

The Gly-cisPro motif, important for rejection of L-amino acids motif lies at 137-138 (GP).

The protein belongs to the DTD family. As to quaternary structure, homodimer.

Its subcellular location is the cytoplasm. It catalyses the reaction glycyl-tRNA(Ala) + H2O = tRNA(Ala) + glycine + H(+). The enzyme catalyses a D-aminoacyl-tRNA + H2O = a tRNA + a D-alpha-amino acid + H(+). Its function is as follows. An aminoacyl-tRNA editing enzyme that deacylates mischarged D-aminoacyl-tRNAs. Also deacylates mischarged glycyl-tRNA(Ala), protecting cells against glycine mischarging by AlaRS. Acts via tRNA-based rather than protein-based catalysis; rejects L-amino acids rather than detecting D-amino acids in the active site. By recycling D-aminoacyl-tRNA to D-amino acids and free tRNA molecules, this enzyme counteracts the toxicity associated with the formation of D-aminoacyl-tRNA entities in vivo and helps enforce protein L-homochirality. The protein is D-aminoacyl-tRNA deacylase of Pseudomonas aeruginosa (strain UCBPP-PA14).